A 415-amino-acid chain; its full sequence is MASAFSPATAAPAASPALFSASTSRPLSLTAAAAAVSARIPSRRGFRRGRFTVCNVAAPSATQQEAKAAGAKESQRPVYPFAAIVGQDEMKLCLLLNVIDPKIGGVMIMGDRGTGKSTTVRSLVDLLPDIRVVVGDPFNSDPDDPEVMGPEVRERVLEGEKLPVVTAKITMVDLPLGATEDRVCGTIDIEKALTDGVKAFEPGLLAKANRGILYVDEVNLLDDHLVDVLLDSAASGWNTVEREGISISHPARFILIGSGNPEEGELRPQLLDRFGMHAQVGTVRDAELRVKIVEERARFDRDPKAFRESYLEEQDKLQQQISSARSNLGAVQIDHDLRVKISKVCAELNVDGLRGDIVTNRAAKALAALKGRDTVTVEDIATVIPNCLRHRLRKDPLESIDSGLLVVEKFYEVFT.

Residues 1-67 (MASAFSPATA…APSATQQEAK (67 aa)) constitute a chloroplast transit peptide. 2 cysteine pairs are disulfide-bonded: Cys93/Cys184 and Cys345/Cys387.

It belongs to the Mg-chelatase subunits D/I family. The magnesium chelatase complex is a heterotrimer consisting of subunits CHLI, CHLD and CHLH.

It is found in the plastid. The protein resides in the chloroplast. The enzyme catalyses protoporphyrin IX + Mg(2+) + ATP + H2O = Mg-protoporphyrin IX + ADP + phosphate + 3 H(+). The protein operates within porphyrin-containing compound metabolism; chlorophyll biosynthesis. Its activity is regulated as follows. Redox regulation; active in reducing conditions, inactive in oxidizing conditions. Thioredoxins f and m mediate the reversible reductive activation of oxidized CHLI. In terms of biological role, involved in chlorophyll biosynthesis. Catalyzes the insertion of magnesium ion into protoporphyrin IX to yield Mg-protoporphyrin IX. The reaction takes place in two steps, with an ATP-dependent activation followed by an ATP-dependent chelation step. This is Magnesium-chelatase subunit ChlI, chloroplastic (CHLI) from Oryza sativa subsp. japonica (Rice).